We begin with the raw amino-acid sequence, 544 residues long: Tyrosine-protein kinase Yes (544 aa).

Residue glycine 2 is the site of N-myristoyl glycine attachment. The SH3 domain maps to 92–153 (GGVTFFVALY…PSNYVAPADS (62 aa)). The SH2 domain occupies 159-256 (WYFGKLSRKD…GLCYKLTTVC (98 aa)). Residues 278–531 (LRLDVRLGQG…YIQSFLEDYF (254 aa)) form the Protein kinase domain. ATP-binding positions include 284–292 (LGQGCFGEV) and lysine 306. The active-site Proton acceptor is aspartate 397. Position 427 is a phosphotyrosine; by autocatalysis (tyrosine 427).

It belongs to the protein kinase superfamily. Tyr protein kinase family. SRC subfamily.

It carries out the reaction L-tyrosyl-[protein] + ATP = O-phospho-L-tyrosyl-[protein] + ADP + H(+). This chain is Tyrosine-protein kinase Yes (yes), found in Xiphophorus hellerii (Green swordtail).